The chain runs to 82 residues: Translational regulator CsrA (82 aa).

Belongs to the CsrA/RsmA family. As to quaternary structure, homodimer; the beta-strands of each monomer intercalate to form a hydrophobic core, while the alpha-helices form wings that extend away from the core.

It is found in the cytoplasm. Functionally, a translational regulator that binds mRNA to regulate translation initiation and/or mRNA stability. Usually binds in the 5'-UTR at or near the Shine-Dalgarno sequence preventing ribosome-binding, thus repressing translation. Its main target seems to be the major flagellin gene, while its function is anatagonized by FliW. This Geobacillus sp. (strain WCH70) protein is Translational regulator CsrA.